A 120-amino-acid chain; its full sequence is NAD(P)H-quinone oxidoreductase subunit 3, chloroplastic (120 aa).

3 helical membrane passes run 10–30 (FWVF…ISGV), 64–84 (IFAL…PWAM), and 88–108 (VLGV…IVGS).

The protein belongs to the complex I subunit 3 family. NDH is composed of at least 16 different subunits, 5 of which are encoded in the nucleus.

Its subcellular location is the plastid. The protein resides in the chloroplast thylakoid membrane. It carries out the reaction a plastoquinone + NADH + (n+1) H(+)(in) = a plastoquinol + NAD(+) + n H(+)(out). It catalyses the reaction a plastoquinone + NADPH + (n+1) H(+)(in) = a plastoquinol + NADP(+) + n H(+)(out). In terms of biological role, NDH shuttles electrons from NAD(P)H:plastoquinone, via FMN and iron-sulfur (Fe-S) centers, to quinones in the photosynthetic chain and possibly in a chloroplast respiratory chain. The immediate electron acceptor for the enzyme in this species is believed to be plastoquinone. Couples the redox reaction to proton translocation, and thus conserves the redox energy in a proton gradient. The sequence is that of NAD(P)H-quinone oxidoreductase subunit 3, chloroplastic from Pelargonium hortorum (Common geranium).